Here is a 120-residue protein sequence, read N- to C-terminus: Protein FAM241B (120 aa).

The segment at Gln-12–Ala-59 is disordered. Composition is skewed to low complexity over residues Arg-19–Gly-39 and Pro-47–Ala-59. Phosphoserine is present on Ser-61. Residues Ile-91–Val-111 traverse the membrane as a helical segment.

The protein belongs to the FAM241 family.

It is found in the membrane. In terms of biological role, may play a role in lysosome homeostasis. The chain is Protein FAM241B from Mus musculus (Mouse).